Reading from the N-terminus, the 369-residue chain is 3-dehydroquinate synthase (369 aa).

Residues 71-76 (DGECHK), 105-109 (GVIND), 129-130 (TT), K142, K151, and 169-172 (TLST) each bind NAD(+). Zn(2+)-binding residues include E184, H247, and H264.

It belongs to the sugar phosphate cyclases superfamily. Dehydroquinate synthase family. Co(2+) serves as cofactor. Zn(2+) is required as a cofactor. Requires NAD(+) as cofactor.

Its subcellular location is the cytoplasm. It catalyses the reaction 7-phospho-2-dehydro-3-deoxy-D-arabino-heptonate = 3-dehydroquinate + phosphate. It participates in metabolic intermediate biosynthesis; chorismate biosynthesis; chorismate from D-erythrose 4-phosphate and phosphoenolpyruvate: step 2/7. Catalyzes the conversion of 3-deoxy-D-arabino-heptulosonate 7-phosphate (DAHP) to dehydroquinate (DHQ). In Dichelobacter nodosus (strain VCS1703A), this protein is 3-dehydroquinate synthase.